Consider the following 142-residue polypeptide: Hemoglobin subunit alpha (142 aa).

A Globin domain is found at 2–142; the sequence is VLSPADKTNV…VSTVLTSKYR (141 aa). S4 bears the Phosphoserine mark. K8 bears the N6-succinyllysine mark. A Phosphothreonine modification is found at T9. K12 carries the post-translational modification N6-succinyllysine. K17 is modified (N6-acetyllysine; alternate). K17 is modified (N6-succinyllysine; alternate). Position 25 is a phosphotyrosine (Y25). S36 is subject to Phosphoserine. Residue K41 is modified to N6-succinyllysine. S50 is modified (phosphoserine). O2 is bound at residue H59. Position 88 (H88) interacts with heme b. At S103 the chain carries Phosphoserine. T109 is subject to Phosphothreonine. Phosphoserine occurs at positions 125 and 132. Phosphothreonine occurs at positions 135 and 138. S139 bears the Phosphoserine mark.

Belongs to the globin family. Heterotetramer of two alpha chains and two beta chains. As to expression, red blood cells.

Its function is as follows. Involved in oxygen transport from the lung to the various peripheral tissues. Hemopressin acts as an antagonist peptide of the cannabinoid receptor CNR1. Hemopressin-binding efficiently blocks cannabinoid receptor CNR1 and subsequent signaling. The protein is Hemoglobin subunit alpha (HBA) of Sapajus apella (Brown-capped capuchin).